We begin with the raw amino-acid sequence, 295 residues long: CCAAT-binding factor complex subunit php4 (295 aa).

A compositionally biased stretch (low complexity) spans 1–19 (MESSKSPSEVEKSSSASPA). Positions 1–69 (MESSKSPSEV…GPTSALSVEE (69 aa)) are disordered. Positions 73-111 (RVREKQYQDTIGKLQKENNELLEQLEMLQAQLKNSTLDS) form a coiled coil. The Nuclear export signal signature appears at 93–100 (LLEQLEML). Positions 108 to 130 (TLDSPKEVEVNSEVVKPDSATTE) are disordered.

As to quaternary structure, component of tha CCAAT-binding complex composed of at least php2, php3, php4 and php5. Interacts with crm1 and grx4.

The protein resides in the cytoplasm. It is found in the nucleus. Its subcellular location is the cytoskeleton. The protein localises to the spindle pole. Component of the transcription regulatory CCAAT-binding complex. Required for the reprogramming of the cell for iron use. Down-regulates pcl1, sdh4, and isa1 underlow-iron conditions. In Schizosaccharomyces pombe (strain 972 / ATCC 24843) (Fission yeast), this protein is CCAAT-binding factor complex subunit php4 (php4).